Here is a 313-residue protein sequence, read N- to C-terminus: Acetaldehyde dehydrogenase (313 aa).

Serine 15 to isoleucine 18 contacts NAD(+). The active-site Acyl-thioester intermediate is the cysteine 133. NAD(+)-binding positions include serine 164–asparagine 172 and asparagine 289.

This sequence belongs to the acetaldehyde dehydrogenase family.

It catalyses the reaction acetaldehyde + NAD(+) + CoA = acetyl-CoA + NADH + H(+). The sequence is that of Acetaldehyde dehydrogenase from Rhizobium rhizogenes (strain K84 / ATCC BAA-868) (Agrobacterium radiobacter).